A 96-amino-acid chain; its full sequence is Large ribosomal subunit protein eL14 (96 aa).

It belongs to the eukaryotic ribosomal protein eL14 family.

The sequence is that of Large ribosomal subunit protein eL14 from Sulfolobus acidocaldarius (strain ATCC 33909 / DSM 639 / JCM 8929 / NBRC 15157 / NCIMB 11770).